The sequence spans 94 residues: Protein RESPONSE TO LOW SULFUR 1 (94 aa).

Residues 8 to 35 (VTVAAEEMDELRRRNIELSREVAEMKTE) are a coiled coil.

This chain is Protein RESPONSE TO LOW SULFUR 1, found in Arabidopsis thaliana (Mouse-ear cress).